The chain runs to 507 residues: ATP synthase subunit alpha, mitochondrial (507 aa).

An ATP-binding site is contributed by Gly-171 to Thr-178.

It belongs to the ATPase alpha/beta chains family. As to quaternary structure, F-type ATPases have 2 components, CF(1) - the catalytic core - and CF(0) - the membrane proton channel. CF(1) has five subunits: alpha(3), beta(3), gamma(1), delta(1), epsilon(1). CF(0) has three main subunits: a, b and c.

It is found in the mitochondrion. The protein resides in the mitochondrion inner membrane. In terms of biological role, mitochondrial membrane ATP synthase (F(1)F(0) ATP synthase or Complex V) produces ATP from ADP in the presence of a proton gradient across the membrane which is generated by electron transport complexes of the respiratory chain. F-type ATPases consist of two structural domains, F(1) - containing the extramembraneous catalytic core, and F(0) - containing the membrane proton channel, linked together by a central stalk and a peripheral stalk. During catalysis, ATP synthesis in the catalytic domain of F(1) is coupled via a rotary mechanism of the central stalk subunits to proton translocation. Subunits alpha and beta form the catalytic core in F(1). Rotation of the central stalk against the surrounding alpha(3)beta(3) subunits leads to hydrolysis of ATP in three separate catalytic sites on the beta subunits. Subunit alpha does not bear the catalytic high-affinity ATP-binding sites. The sequence is that of ATP synthase subunit alpha, mitochondrial (ATPA) from Arabidopsis thaliana (Mouse-ear cress).